The primary structure comprises 93 residues: Phosphoribosyl-ATP pyrophosphatase (93 aa).

Belongs to the PRA-PH family.

The protein localises to the cytoplasm. The catalysed reaction is 1-(5-phospho-beta-D-ribosyl)-ATP + H2O = 1-(5-phospho-beta-D-ribosyl)-5'-AMP + diphosphate + H(+). It functions in the pathway amino-acid biosynthesis; L-histidine biosynthesis; L-histidine from 5-phospho-alpha-D-ribose 1-diphosphate: step 2/9. The sequence is that of Phosphoribosyl-ATP pyrophosphatase from Rhodococcus erythropolis (strain PR4 / NBRC 100887).